Reading from the N-terminus, the 195-residue chain is Thymidylate kinase (195 aa).

7–14 provides a ligand contact to ATP; it reads GVDTCGKS.

This sequence belongs to the thymidylate kinase family.

It catalyses the reaction dTMP + ATP = dTDP + ADP. Its function is as follows. Phosphorylation of dTMP to form dTDP in both de novo and salvage pathways of dTTP synthesis. The polypeptide is Thymidylate kinase (Helicobacter hepaticus (strain ATCC 51449 / 3B1)).